Consider the following 2028-residue polypeptide: Phosphatidylinositol 4-kinase alpha 1 (2028 aa).

The interval 184 to 241 is disordered; sequence PASPKEQRQQNSANSETDTSSSQGSPISTNRYPSGKTEMASPGDEVASHGSNLSSKSS. Polar residues predominate over residues 192 to 215; it reads QQNSANSETDTSSSQGSPISTNRY. Positions 231–241 are enriched in low complexity; that stretch reads SHGSNLSSKSS. A PIK helical domain is found at 1483–1659; the sequence is TEYAKTAFSV…NAAFQEILPQ (177 aa). Residues 1660 to 1773 are pleckstrin homology (PH) domain conferring phosphoinositide binding specificity; sequence VRQHIIDGFS…VKPQACIFKV (114 aa). A PI3K/PI4K catalytic domain is found at 1734–2012; that stretch reads VDSGIPLQSA…VCTDAYNKWT (279 aa). The G-loop stretch occupies residues 1740–1746; sequence LQSAAKV. Residues 1876 to 1884 are catalytic loop; that stretch reads QPKDRHNGN. The activation loop stretch occupies residues 1895 to 1920; sequence HIDFGFILETSPGGNMRFESAHFKLS.

This sequence belongs to the PI3/PI4-kinase family. Type III PI4K subfamily. As to quaternary structure, interacts in vitro with actin filaments via its PH domain. Present in leaves and inflorescences.

Its subcellular location is the membrane. The protein resides in the cytoplasm. It is found in the perinuclear region. It catalyses the reaction a 1,2-diacyl-sn-glycero-3-phospho-(1D-myo-inositol) + ATP = a 1,2-diacyl-sn-glycero-3-phospho-(1D-myo-inositol 4-phosphate) + ADP + H(+). With respect to regulation, repressed by PtdIns4P, adenosine and wortmannin, but stimulated by other negatively charged lipids such as PtdIns3P, PtdOH, and phosphatidyl-serine (PtdSer). Functionally, acts on phosphatidylinositol (PtdIns) in the first committed step in the production of the second messenger inositol-1,4,5,-trisphosphate. Can bind to phosphatidylinositol 4-monophosphate (PI-4-P or PtdIns4P), phosphatidylinositol 4,5-bisphosphate (PI-4,5-P2 or PtdIns4,5P2), and phosphatidic acid (PtdOH), but not to 3-phosphoinositides. May function upstream of the cold response phosphoinositide-dependent phospholipase C (PI-PLC) pathway. The polypeptide is Phosphatidylinositol 4-kinase alpha 1 (Arabidopsis thaliana (Mouse-ear cress)).